The primary structure comprises 36 residues: Egg-laying hormone (36 aa).

The residue at position 36 (Lys-36) is a Lysine amide.

This sequence belongs to the molluscan ELH family. In terms of tissue distribution, bag cell neurons.

The protein localises to the secreted. Its function is as follows. ELH acts as a neurotransmitter locally, upon neurons of the abdominal ganglion and as a hormone by diffusing into the circulating hemolymph and modulating the activity of other organs. It specifically causes contraction of smooth muscle in the ovotestis and expulsion of the egg string. The polypeptide is Egg-laying hormone (Aplysia fasciata (Mottled sea hare)).